We begin with the raw amino-acid sequence, 502 residues long: MLLDVNTNHTLMHDAHVHEHCLIKSIRDDGALHSWSDSSKVFYPKSFYATATNKKNNKLASASMNKTATSNRTVSDEIYFHSTKPQFDGQGSAERTRTLTKRNSFKRTRILKARDDSELLNENRSSLMTPSLSSVMSQVRKTNSAKTLSGECPIHEGHLTQSIKRKFSEEAQSDCSSLSSSKLHPLTDDIADAVDLQTPAIGDEVLAEPVVPKMKIININDLDLFDDWEVKDLVDIFPPVYERRPRSSSALSLVSASSDAKLRPTSVDFQIIDKKGGKTSRRKSRSKSTTENMIYENDLVELEQWPSASPSPETDGSIASSELLPNKRIRQKSLNTNFLKLYSIETSCKRKSILPEVEVDDHLLKQLTYSEIRSLEIKKEPNVSTNDIKLALITRKKLWSDMVHETRNDLFGDSTPWNLHFVATTSNTEPSQGRESASEHATADLKSSLVRVHSDVKPWFNNGGTMLKPCGKLNLGKVTNKTSAPTREIQYVVKGWCDSRFL.

The protein localises to the cytoplasm. It localises to the nucleus. The polypeptide is Protein GIS3 (GIS3) (Saccharomyces cerevisiae (strain ATCC 204508 / S288c) (Baker's yeast)).